The primary structure comprises 308 residues: Testis-specific Y-encoded protein 1 (308 aa).

The protein belongs to the nucleosome assembly protein (NAP) family. Post-translationally, phosphorylated. As to expression, specifically expressed in testicular tissues. Isoform 1 and isoform 2 are expressed in spermatogonia and spermatocytes. Found in early testicular carcinoma in situ, spermatogonial cells in testicular tissues of 46,X,Y female and in prostate cancer cell lines.

Its subcellular location is the cytoplasm. The protein localises to the nucleus. In terms of biological role, may be involved in sperm differentiation and proliferation. This is Testis-specific Y-encoded protein 1 (TSPY1) from Homo sapiens (Human).